The sequence spans 141 residues: UPF0310 protein SGO_1818 (141 aa).

The protein belongs to the UPF0310 family.

The chain is UPF0310 protein SGO_1818 from Streptococcus gordonii (strain Challis / ATCC 35105 / BCRC 15272 / CH1 / DL1 / V288).